Here is a 373-residue protein sequence, read N- to C-terminus: P2Y purinoceptor 1 (373 aa).

Over M1–F51 the chain is Extracellular. N11 and N27 each carry an N-linked (GlcNAc...) asparagine glycan. 2 disulfides stabilise this stretch: C42–C296 and C124–C202. K46 lines the ADP pocket. A helical membrane pass occupies residues Y52 to W74. Residues M75–S87 lie on the Cytoplasmic side of the membrane. A helical transmembrane segment spans residues V88–F109. The Extracellular segment spans residues Y110–K125. Residue N113 is glycosylated (N-linked (GlcNAc...) asparagine). The helical transmembrane segment at L126–A147 threads the bilayer. Topologically, residues H148–K166 are cytoplasmic. A helical transmembrane segment spans residues N167–F188. Residues Y189 to Y214 are Extracellular-facing. N197 is a glycosylation site (N-linked (GlcNAc...) asparagine). Y203–S205 serves as a coordination point for ADP. A helical membrane pass occupies residues F215 to Y237. Residues G238–Y260 lie on the Cytoplasmic side of the membrane. A helical membrane pass occupies residues L261 to L284. ADP-binding positions include N283–R287, Y303–Y306, and R310. Topologically, residues R285 to Y303 are extracellular. The chain crosses the membrane as a helical span at residues A304–F325. Topologically, residues L326 to L373 are cytoplasmic.

The protein belongs to the G-protein coupled receptor 1 family. Expressed in muscle, heart, liver, kidney, lung, brain, spleen, but not in testis.

The protein resides in the cell membrane. Functionally, receptor for extracellular adenine nucleotides such as ADP. In platelets, binding to ADP leads to mobilization of intracellular calcium ions via activation of phospholipase C, a change in platelet shape, and ultimately platelet aggregation. The protein is P2Y purinoceptor 1 (P2ry1) of Rattus norvegicus (Rat).